Reading from the N-terminus, the 133-residue chain is Interleukin-5 (133 aa).

An N-terminal signal peptide occupies residues 1–20 (MRRMLLHLSVLTLSCVWATA). N-linked (GlcNAc...) asparagine glycans are attached at residues asparagine 46, asparagine 75, and asparagine 89.

The protein belongs to the IL-5 family. As to quaternary structure, homodimer; disulfide-linked. Interacts with IL5RA. Interacts with CSF2RB. As to expression, expressed in lymphoid cells, including spleen, thymus, lymph nodes and peripheral blood mononuclear cells.

It localises to the secreted. In terms of biological role, homodimeric cytokine expressed predominantly by T-lymphocytes and NK cells that plays an important role in the survival, differentiation, and chemotaxis of eosinophils. Also acts on activated and resting B-cells to induce immunoglobulin production, growth, and differentiation. Mechanistically, exerts its biological effects through a receptor composed of IL5RA subunit and the cytokine receptor common subunit beta/CSF2RB. Binding to the receptor leads to activation of various kinases including LYN, SYK and JAK2 and thereby propagates signals through the RAS-MAPK and JAK-STAT5 pathways respectively. This chain is Interleukin-5 (Il5), found in Mus musculus (Mouse).